Consider the following 528-residue polypeptide: ATP synthase subunit alpha 1 (528 aa).

Position 177 to 184 (177 to 184 (GDRQTGKT)) interacts with ATP.

The protein belongs to the ATPase alpha/beta chains family. F-type ATPases have 2 components, CF(1) - the catalytic core - and CF(0) - the membrane proton channel. CF(1) has five subunits: alpha(3), beta(3), gamma(1), delta(1), epsilon(1). CF(0) has three main subunits: a(1), b(2) and c(9-12). The alpha and beta chains form an alternating ring which encloses part of the gamma chain. CF(1) is attached to CF(0) by a central stalk formed by the gamma and epsilon chains, while a peripheral stalk is formed by the delta and b chains.

The protein localises to the cell inner membrane. It carries out the reaction ATP + H2O + 4 H(+)(in) = ADP + phosphate + 5 H(+)(out). Its function is as follows. Produces ATP from ADP in the presence of a proton gradient across the membrane. The alpha chain is a regulatory subunit. This Pseudoalteromonas atlantica (strain T6c / ATCC BAA-1087) protein is ATP synthase subunit alpha 1.